We begin with the raw amino-acid sequence, 411 residues long: Argininosuccinate lyase (411 aa).

This sequence belongs to the lyase 1 family. Argininosuccinate lyase subfamily.

It is found in the cytoplasm. The enzyme catalyses 2-(N(omega)-L-arginino)succinate = fumarate + L-arginine. The protein operates within amino-acid biosynthesis; L-arginine biosynthesis; L-arginine from L-ornithine and carbamoyl phosphate: step 3/3. This chain is Argininosuccinate lyase, found in Legionella pneumophila subsp. pneumophila (strain Philadelphia 1 / ATCC 33152 / DSM 7513).